Reading from the N-terminus, the 482-residue chain is GTPase Obg (482 aa).

Residues 2 to 159 enclose the Obg domain; the sequence is PRFVDRVVIH…VDLTLELKTV (158 aa). The 181-residue stretch at 160-340 folds into the OBG-type G domain; sequence ADVGLVGFPS…LTFALWEMIV (181 aa). Residues 166–173, 191–195, 212–215, 292–295, and 321–323 contribute to the GTP site; these read GFPSAGKS, FTTLV, DVPG, NKVD, and STL. Mg(2+) contacts are provided by Ser173 and Thr193. The OCT domain maps to 358–438; it reads PIPVDESGFT…IGDMTFDWEP (81 aa). A disordered region spans residues 441–482; it reads PAGVDVTMSGRGTDARIDKTDRVGAAERRQARRVRRGQVEPE. The span at 453 to 469 shows a compositional bias: basic and acidic residues; it reads TDARIDKTDRVGAAERR.

This sequence belongs to the TRAFAC class OBG-HflX-like GTPase superfamily. OBG GTPase family. As to quaternary structure, monomer. Requires Mg(2+) as cofactor.

The protein localises to the cytoplasm. Functionally, an essential GTPase which binds GTP, GDP and possibly (p)ppGpp with moderate affinity, with high nucleotide exchange rates and a fairly low GTP hydrolysis rate. Plays a role in control of the cell cycle, stress response, ribosome biogenesis and in those bacteria that undergo differentiation, in morphogenesis control. This Mycobacteroides abscessus (strain ATCC 19977 / DSM 44196 / CCUG 20993 / CIP 104536 / JCM 13569 / NCTC 13031 / TMC 1543 / L948) (Mycobacterium abscessus) protein is GTPase Obg.